The following is a 415-amino-acid chain: Glutamyl-tRNA reductase (415 aa).

Substrate-binding positions include 49 to 52 (TCNR), serine 106, 111 to 113 (EPQ), and glutamine 117. Catalysis depends on cysteine 50, which acts as the Nucleophile. 186–191 (GAGETI) provides a ligand contact to NADP(+).

This sequence belongs to the glutamyl-tRNA reductase family. Homodimer.

The enzyme catalyses (S)-4-amino-5-oxopentanoate + tRNA(Glu) + NADP(+) = L-glutamyl-tRNA(Glu) + NADPH + H(+). It functions in the pathway porphyrin-containing compound metabolism; protoporphyrin-IX biosynthesis; 5-aminolevulinate from L-glutamyl-tRNA(Glu): step 1/2. Catalyzes the NADPH-dependent reduction of glutamyl-tRNA(Glu) to glutamate 1-semialdehyde (GSA). The polypeptide is Glutamyl-tRNA reductase (Teredinibacter turnerae (strain ATCC 39867 / T7901)).